We begin with the raw amino-acid sequence, 336 residues long: Glutamyl endopeptidase (336 aa).

A signal peptide spans Met-1–Ala-29. Positions Leu-30–Asn-68 are excised as a propeptide. Positions Ala-34–Leu-61 are disordered. The segment covering Pro-39–Lys-51 has biased composition (low complexity). Active-site charge relay system residues include His-119, Asp-161, and Ser-237. The disordered stretch occupies residues Phe-283–Ala-336. Residues Asp-286–Ala-336 show a composition bias toward low complexity. 11 tandem repeats follow at residues Pro-289 to Asn-291, Pro-292 to Asn-294, Pro-295 to Asn-297, Pro-298 to Asn-300, Pro-301 to Asn-303, Pro-304 to Asn-306, Pro-310 to Asn-312, Pro-313 to Asn-315, Pro-316 to Asn-318, Pro-319 to Asn-321, and Pro-322 to Asn-324. The 11 X 3 AA repeats of P-[DN]-N stretch occupies residues Pro-289–Asn-324.

It belongs to the peptidase S1B family. Proteolytically cleaved by aureolysin (aur). This cleavage leads to the activation of SspA.

It is found in the secreted. The catalysed reaction is Preferential cleavage: Glu-|-Xaa, Asp-|-Xaa.. Functionally, preferentially cleaves peptide bonds on the carboxyl-terminal side of aspartate and glutamate. Along with other extracellular proteases it is involved in colonization and infection of human tissues. Required for proteolytic maturation of thiol protease SspB and inactivation of SspC, an inhibitor of SspB. It is the most important protease for degradation of fibronectin-binding protein (FnBP) and surface protein A, which are involved in adherence to host cells. May also protect bacteria against host defense mechanism by cleaving the immunoglobulin classes IgG, IgA and IgM. May be involved in the stability of secreted lipases. This is Glutamyl endopeptidase (sspA) from Staphylococcus aureus (strain COL).